The following is a 415-amino-acid chain: Isocitrate dehydrogenase [NADP] (415 aa).

NADP(+) is bound by residues Thr77–Thr79 and Arg84. Thr79 is a binding site for substrate. Substrate-binding positions include Ser96 to Arg102, Arg111, and Arg134. Position 254 (Asp254) interacts with Mn(2+). NADP(+) is bound at residue Lys262. Residue Asp277 participates in Mn(2+) binding. NADP(+) is bound by residues Gly312–His317 and Asn330.

Belongs to the isocitrate and isopropylmalate dehydrogenases family. In terms of assembly, heterodimer. Requires Mg(2+) as cofactor. Mn(2+) is required as a cofactor.

The protein resides in the cytoplasm. It catalyses the reaction D-threo-isocitrate + NADP(+) = 2-oxoglutarate + CO2 + NADPH. Its function is as follows. May supply 2-oxoglutarate for amino acid biosynthesis and ammonia assimilation via the glutamine synthetase/glutamate synthase (GS/GOGAT) pathway. The protein is Isocitrate dehydrogenase [NADP] of Nicotiana tabacum (Common tobacco).